The following is a 176-amino-acid chain: Translation initiation factor IF-3 (176 aa).

The protein belongs to the IF-3 family. Monomer.

The protein resides in the cytoplasm. IF-3 binds to the 30S ribosomal subunit and shifts the equilibrium between 70S ribosomes and their 50S and 30S subunits in favor of the free subunits, thus enhancing the availability of 30S subunits on which protein synthesis initiation begins. The protein is Translation initiation factor IF-3 of Streptococcus pyogenes serotype M4 (strain MGAS10750).